The primary structure comprises 124 residues: uncharacterized protein (124 aa).

This is an uncharacterized protein from Haemophilus influenzae (strain ATCC 51907 / DSM 11121 / KW20 / Rd).